A 179-amino-acid chain; its full sequence is Prion-like protein doppel (179 aa).

The signal sequence occupies residues M1 to K25. The flexible tail stretch occupies residues R27–A50. Residues R51–G155 are globular. Cystine bridges form between C95-C148 and C109-C143. N-linked (GlcNAc...) asparagine glycosylation is found at N99 and N111. The segment at K125–I142 is cu(2+) binding. Residue G155 is the site of GPI-anchor amidated glycine attachment. Positions A156–K179 are cleaved as a propeptide — removed in mature form.

This sequence belongs to the prion family. In terms of processing, N-glycosylated. N-glycosylated at two distinct sites. Post-translationally, O-glycosylated. As to expression, detected in testis. Detected within seminiferous tubules, on round and elongated spermatids (at protein level). Not detected in brain (at protein level). Detected in testis, and at low levels in heart. Expression in brain is very low and barely detectable.

Its subcellular location is the cell membrane. Functionally, required for normal acrosome reaction and for normal male fertility. Can bind Cu(2+). The sequence is that of Prion-like protein doppel (Prnd) from Mus musculus (Mouse).